A 343-amino-acid polypeptide reads, in one-letter code: MTTITITRPDDWHIHLRDGAQLKDTVRDISRYMGRAIVMPNLVPPAIDTETALTYYDRIKAQVPAGSQFEPLMVLYLTDKTSPDEIRRAKASGKIVAAKLYPAGATTNSDSGVTDLKNIYPALEAMQEVGMLFLVHGEVTDSSIDIFDRERVFIENILSKIVADFPELKIVLEHITTKDAVDFVTQASDNVAATITAHHLLYNRNHMLAGGIRPHFYCLPILKRNTHQQALLAAAASGSKKFFLGTDSAPHAKDKKEAACGCAGSYTAHAAIELYAEAFESVNALDKLEAFASFNGPDFYNLPRNADTITLVKKPWNVPATYPLGDTNVVPIRAGEAIDWQVE.

Positions 13 and 15 each coordinate Zn(2+). Residues 15–17 (HLR) and Asn41 each bind substrate. Zn(2+)-binding residues include Lys99, His136, and His174. N6-carboxylysine is present on Lys99. Residue His136 participates in substrate binding. Leu219 is a substrate binding site. Zn(2+) is bound at residue Asp247. Asp247 is an active-site residue. The substrate site is built by His251 and Ala263.

It belongs to the metallo-dependent hydrolases superfamily. DHOase family. Class II DHOase subfamily. In terms of assembly, homodimer. The cofactor is Zn(2+).

The catalysed reaction is (S)-dihydroorotate + H2O = N-carbamoyl-L-aspartate + H(+). Its pathway is pyrimidine metabolism; UMP biosynthesis via de novo pathway; (S)-dihydroorotate from bicarbonate: step 3/3. Its function is as follows. Catalyzes the reversible cyclization of carbamoyl aspartate to dihydroorotate. This Shewanella baltica (strain OS195) protein is Dihydroorotase.